The chain runs to 1082 residues: Importin-4 (1082 aa).

Residue M1 is modified to N-acetylmethionine. In terms of domain architecture, Importin N-terminal spans 24–90 (ATEQLQTILR…KSLVLTALQK (67 aa)). HEAT repeat units follow at residues 348-385 (KLCP…GAGD), 390-427 (RLLY…NLQP), 431-471 (SYSE…NLGP), 475-513 (PYLP…AAQD), 896-933 (QFVS…HGGC), and 937-975 (DHFP…ASPV).

This sequence belongs to the importin beta family. As to quaternary structure, found in a cytosolic complex with ASF1 (ASF1A or ASF1B) and histones H3 and H4.

The protein resides in the cytoplasm. It localises to the nucleus. Functionally, nuclear transport receptor that mediates nuclear import of proteins, such as histones, RPS3A, TNP2 and VDR. Serves as receptor for nuclear localization signals (NLS) in cargo substrates. Is thought to mediate docking of the importin/substrate complex to the nuclear pore complex (NPC) through binding to nucleoporin and the complex is subsequently translocated through the pore by an energy requiring, Ran-dependent mechanism. At the nucleoplasmic side of the NPC, Ran binds to the importin, the importin/substrate complex dissociates and importin is re-exported from the nucleus to the cytoplasm where GTP hydrolysis releases Ran. The directionality of nuclear import is thought to be conferred by an asymmetric distribution of the GTP- and GDP-bound forms of Ran between the cytoplasm and nucleus. Mediates the nuclear import of the histone H3-H4 dimer when in complex with ASF1 (ASF1A or ASF1B). Mediates the ligand-independent nuclear import of vitamin D receptor (VDR). The sequence is that of Importin-4 (Ipo4) from Mus musculus (Mouse).